The primary structure comprises 1343 residues: DNA-directed RNA polymerase subunit beta (1343 aa).

This sequence belongs to the RNA polymerase beta chain family. The RNAP catalytic core consists of 2 alpha, 1 beta, 1 beta' and 1 omega subunit. When a sigma factor is associated with the core the holoenzyme is formed, which can initiate transcription.

It catalyses the reaction RNA(n) + a ribonucleoside 5'-triphosphate = RNA(n+1) + diphosphate. DNA-dependent RNA polymerase catalyzes the transcription of DNA into RNA using the four ribonucleoside triphosphates as substrates. The sequence is that of DNA-directed RNA polymerase subunit beta from Shewanella violacea.